The following is a 484-amino-acid chain: UDP-N-acetylmuramate--L-alanine ligase (484 aa).

126 to 132 is an ATP binding site; sequence GTHGKTT.

Belongs to the MurCDEF family.

The protein resides in the cytoplasm. The enzyme catalyses UDP-N-acetyl-alpha-D-muramate + L-alanine + ATP = UDP-N-acetyl-alpha-D-muramoyl-L-alanine + ADP + phosphate + H(+). It functions in the pathway cell wall biogenesis; peptidoglycan biosynthesis. Cell wall formation. This Aeromonas hydrophila subsp. hydrophila (strain ATCC 7966 / DSM 30187 / BCRC 13018 / CCUG 14551 / JCM 1027 / KCTC 2358 / NCIMB 9240 / NCTC 8049) protein is UDP-N-acetylmuramate--L-alanine ligase.